A 402-amino-acid polypeptide reads, in one-letter code: Non-homologous end joining protein Ku (402 aa).

Residues 12-185 (ISFGLVTIPV…VAALTGIAQP (174 aa)) enclose the Ku domain. Positions 261–402 (QRAAGGATGG…GPDETAPGGP (142 aa)) are disordered. 2 stretches are compositionally biased toward low complexity: residues 299–308 (GDPAASVPGV) and 332–343 (VPGVPATAVPGT). Pro residues predominate over residues 344-358 (PGAPVPTAPGVPSAP). Residues 359–376 (APGTSPTSVPGVQTAPNG) are compositionally biased toward low complexity.

It belongs to the prokaryotic Ku family. As to quaternary structure, homodimer. Interacts with LigD.

In terms of biological role, with LigD forms a non-homologous end joining (NHEJ) DNA repair enzyme, which repairs dsDNA breaks with reduced fidelity. Binds linear dsDNA with 5'- and 3'- overhangs but not closed circular dsDNA nor ssDNA. Recruits and stimulates the ligase activity of LigD. The sequence is that of Non-homologous end joining protein Ku from Symbiobacterium thermophilum (strain DSM 24528 / JCM 14929 / IAM 14863 / T).